A 262-amino-acid polypeptide reads, in one-letter code: tRNA pseudouridine synthase A (262 aa).

Asp-52 serves as the catalytic Nucleophile. Tyr-103 is a substrate binding site.

This sequence belongs to the tRNA pseudouridine synthase TruA family.

It carries out the reaction uridine(38/39/40) in tRNA = pseudouridine(38/39/40) in tRNA. In terms of biological role, formation of pseudouridine at positions 38, 39 and 40 in the anticodon stem and loop of transfer RNAs. This chain is tRNA pseudouridine synthase A, found in Methanococcus maripaludis (strain C6 / ATCC BAA-1332).